The chain runs to 166 residues: Lipoprotein signal peptidase (166 aa).

3 consecutive transmembrane segments (helical) span residues 12–32 (WLWL…LILQ), 70–90 (WFFA…MYRS), and 102–122 (ALII…GFVV). Active-site residues include D123 and D141. The helical transmembrane segment at 137-157 (FNLADTAICIGAALIVLEGFL) threads the bilayer.

It belongs to the peptidase A8 family.

Its subcellular location is the cell inner membrane. The enzyme catalyses Release of signal peptides from bacterial membrane prolipoproteins. Hydrolyzes -Xaa-Yaa-Zaa-|-(S,diacylglyceryl)Cys-, in which Xaa is hydrophobic (preferably Leu), and Yaa (Ala or Ser) and Zaa (Gly or Ala) have small, neutral side chains.. The protein operates within protein modification; lipoprotein biosynthesis (signal peptide cleavage). This protein specifically catalyzes the removal of signal peptides from prolipoproteins. This Salmonella paratyphi A (strain ATCC 9150 / SARB42) protein is Lipoprotein signal peptidase.